The sequence spans 199 residues: Large ribosomal subunit protein uL5 (199 aa).

This sequence belongs to the universal ribosomal protein uL5 family. Part of the 50S ribosomal subunit; part of the 5S rRNA/L5/L18/L25 subcomplex. Contacts the 5S rRNA and the P site tRNA. Forms a bridge to the 30S subunit in the 70S ribosome.

This is one of the proteins that bind and probably mediate the attachment of the 5S RNA into the large ribosomal subunit, where it forms part of the central protuberance. In the 70S ribosome it contacts protein S13 of the 30S subunit (bridge B1b), connecting the 2 subunits; this bridge is implicated in subunit movement. Contacts the P site tRNA; the 5S rRNA and some of its associated proteins might help stabilize positioning of ribosome-bound tRNAs. This is Large ribosomal subunit protein uL5 from Frankia casuarinae (strain DSM 45818 / CECT 9043 / HFP020203 / CcI3).